The chain runs to 134 residues: Rhoptry antigen protein (134 aa).

2 disordered regions span residues Met21–Lys82 and Gln96–Leu134. Positions Lys29–Asp38 are enriched in polar residues. Residues Glu39–Gly54 are compositionally biased toward low complexity. Residues Gly57–Met69 show a composition bias toward basic and acidic residues. The span at Pro102–Arg113 shows a compositional bias: basic residues. Basic and acidic residues predominate over residues Asp114–Lys126.

In Plasmodium falciparum, this protein is Rhoptry antigen protein.